Consider the following 128-residue polypeptide: Small ribosomal subunit protein uS11 (128 aa).

This sequence belongs to the universal ribosomal protein uS11 family. As to quaternary structure, part of the 30S ribosomal subunit. Interacts with proteins S7 and S18. Binds to IF-3.

Its function is as follows. Located on the platform of the 30S subunit, it bridges several disparate RNA helices of the 16S rRNA. Forms part of the Shine-Dalgarno cleft in the 70S ribosome. The polypeptide is Small ribosomal subunit protein uS11 (Wolbachia pipientis subsp. Culex pipiens (strain wPip)).